Here is a 135-residue protein sequence, read N- to C-terminus: Interleukin-4 (135 aa).

The first 24 residues, 1–24 (MGLTSQLIPALVCLLVCTSHFVHG), serve as a signal peptide directing secretion. Disulfide bonds link C48/C85 and C70/C105. N-linked (GlcNAc...) asparagine glycans are attached at residues N62 and N96.

This sequence belongs to the IL-4/IL-13 family.

It is found in the secreted. Its function is as follows. Participates in at least several B-cell activation processes as well as of other cell types. It is a costimulator of DNA-synthesis. It induces the expression of class II MHC molecules on resting B-cells. It enhances both secretion and cell surface expression of IgE and IgG1. It also regulates the expression of the low affinity Fc receptor for IgE (CD23) on both lymphocytes and monocytes. Positively regulates IL31RA expression in macrophages. Stimulates autophagy in dendritic cells by interfering with mTORC1 signaling and through the induction of RUFY4. The sequence is that of Interleukin-4 (IL4) from Ovis aries (Sheep).